Here is a 37-residue protein sequence, read N- to C-terminus: U10-ctenitoxin-Co1a (37 aa).

4 disulfides stabilise this stretch: Cys2–Cys17, Cys9–Cys22, Cys16–Cys33, and Cys24–Cys31.

In terms of tissue distribution, expressed by the venom gland.

It is found in the secreted. Its function is as follows. Antagonist of L-type calcium channels (Cav1/CACNA1). This chain is U10-ctenitoxin-Co1a, found in Ctenus ornatus (Brazilian spider).